Here is a 377-residue protein sequence, read N- to C-terminus: Killer cell immunoglobulin-like receptor 2DL4 (377 aa).

Positions 1 to 21 are cleaved as a signal peptide; it reads MSMSPTVIILACLGFFLDQSV. Over 22–242 the chain is Extracellular; it reads WAHVGGQDKP…FKTGIARHLH (221 aa). Ig-like C2-type domains lie at 44–104 and 139–202; these read GGHV…HPHS and GENV…FHGS. Residues cysteine 51 and cysteine 97 are joined by a disulfide bond. N-linked (GlcNAc...) asparagine glycans are attached at residues asparagine 141 and asparagine 175. A disulfide bridge connects residues cysteine 146 and cysteine 195. The helical transmembrane segment at 243–263 threads the bilayer; the sequence is AVIRYSVAIILFTILPFFLLH. The Cytoplasmic segment spans residues 264–377; that stretch reads RWCSKKKDAA…ASSNVPAAGI (114 aa). Residues 338–377 form a disordered region; that stretch reads PRALSPAHEHHSQALMGSSRETTALSQTQLASSNVPAAGI. The segment covering 352-377 has biased composition (polar residues); that stretch reads LMGSSRETTALSQTQLASSNVPAAGI.

The protein belongs to the immunoglobulin superfamily. Interacts with peptide-bound HLA-G-B2M heterotrimeric complex. Interacts with ARRB2. Expressed in decidual NK cells and innate lymphoid cell type I (ILC1). Expressed in a subset of peripheral NK cells.

The protein localises to the cell membrane. It localises to the early endosome membrane. Its function is as follows. Receptor for non-classical major histocompatibility class Ib HLA-G molecules. Recognizes HLA-G in complex with B2M/beta-2 microglobulin and a nonamer self-peptide (peptide-bound HLA-G-B2M). In decidual NK cells, binds peptide-bound HLA-G-B2M complex and triggers NK cell senescence-associated secretory phenotype as a molecular switch to promote vascular remodeling and fetal growth in early pregnancy. May play a role in balancing tolerance and antiviral-immunity at maternal-fetal interface by keeping in check the effector functions of NK, CD8+ T cells and B cells. Upon interaction with peptide-bound HLA-G-B2M, initiates signaling from the endosomal compartment leading to downstream activation of PRKDC-XRCC5 and AKT1, and ultimately triggering NF-kappa-B-dependent pro-inflammatory response. The sequence is that of Killer cell immunoglobulin-like receptor 2DL4 from Homo sapiens (Human).